The following is a 103-amino-acid chain: Pyrimidine/purine nucleoside phosphorylase (103 aa).

This sequence belongs to the nucleoside phosphorylase PpnP family.

It catalyses the reaction a purine D-ribonucleoside + phosphate = a purine nucleobase + alpha-D-ribose 1-phosphate. It carries out the reaction adenosine + phosphate = alpha-D-ribose 1-phosphate + adenine. The enzyme catalyses cytidine + phosphate = cytosine + alpha-D-ribose 1-phosphate. The catalysed reaction is guanosine + phosphate = alpha-D-ribose 1-phosphate + guanine. It catalyses the reaction inosine + phosphate = alpha-D-ribose 1-phosphate + hypoxanthine. It carries out the reaction thymidine + phosphate = 2-deoxy-alpha-D-ribose 1-phosphate + thymine. The enzyme catalyses uridine + phosphate = alpha-D-ribose 1-phosphate + uracil. The catalysed reaction is xanthosine + phosphate = alpha-D-ribose 1-phosphate + xanthine. Functionally, catalyzes the phosphorolysis of diverse nucleosides, yielding D-ribose 1-phosphate and the respective free bases. Can use uridine, adenosine, guanosine, cytidine, thymidine, inosine and xanthosine as substrates. Also catalyzes the reverse reactions. This Laribacter hongkongensis (strain HLHK9) protein is Pyrimidine/purine nucleoside phosphorylase.